The sequence spans 91 residues: Small ribosomal subunit protein uS19 (91 aa).

This sequence belongs to the universal ribosomal protein uS19 family.

Its function is as follows. Protein S19 forms a complex with S13 that binds strongly to the 16S ribosomal RNA. This is Small ribosomal subunit protein uS19 from Pseudomonas paraeruginosa (strain DSM 24068 / PA7) (Pseudomonas aeruginosa (strain PA7)).